We begin with the raw amino-acid sequence, 144 residues long: L-fucose mutarotase (144 aa).

Catalysis depends on His-22, which acts as the Proton donor. Substrate contacts are provided by residues Asp-30, Arg-109, and 131–133; that span reads YGN.

Belongs to the RbsD / FucU family. FucU mutarotase subfamily. As to quaternary structure, homodecamer.

It localises to the cytoplasm. It catalyses the reaction alpha-L-fucose = beta-L-fucose. It functions in the pathway carbohydrate metabolism; L-fucose metabolism. Its function is as follows. Involved in the anomeric conversion of L-fucose. In Actinobacillus pleuropneumoniae serotype 5b (strain L20), this protein is L-fucose mutarotase.